Reading from the N-terminus, the 101-residue chain is Small ribosomal subunit protein uS14 (101 aa).

The protein belongs to the universal ribosomal protein uS14 family. In terms of assembly, part of the 30S ribosomal subunit. Contacts proteins S3 and S10.

In terms of biological role, binds 16S rRNA, required for the assembly of 30S particles and may also be responsible for determining the conformation of the 16S rRNA at the A site. This Synechococcus sp. (strain JA-3-3Ab) (Cyanobacteria bacterium Yellowstone A-Prime) protein is Small ribosomal subunit protein uS14.